The following is a 54-amino-acid chain: Large ribosomal subunit protein bL32c (54 aa).

Belongs to the bacterial ribosomal protein bL32 family.

The protein resides in the plastid. The protein localises to the chloroplast. The polypeptide is Large ribosomal subunit protein bL32c (Gossypium barbadense (Sea Island cotton)).